Consider the following 232-residue polypeptide: Pirin-like protein CC_1473 (232 aa).

It belongs to the pirin family.

This Caulobacter vibrioides (strain ATCC 19089 / CIP 103742 / CB 15) (Caulobacter crescentus) protein is Pirin-like protein CC_1473.